Consider the following 314-residue polypeptide: MIOREX complex component 8 (314 aa).

Positions 132 to 312 (TLPEVIFLGG…RYVIFQSCGL (181 aa)) constitute an EngB-type G domain. GTP contacts are provided by residues 140 to 147 (GGTNVGKS), 173 to 177 (GFTKT), 191 to 194 (DSPG), 253 to 256 (TKMD), and 290 to 292 (SST). Residues S147 and T175 each coordinate Mg(2+).

The protein belongs to the TRAFAC class TrmE-Era-EngA-EngB-Septin-like GTPase superfamily. EngB GTPase family. Associates with the mitochondrial ribosome. The cofactor is Mg(2+). Post-translationally, sumoylated upon ethanol stress.

Its subcellular location is the mitochondrion. Component of MIOREX complexes, large expressome-like assemblies of ribosomes with factors involved in all the steps of post-transcriptional gene expression. This chain is MIOREX complex component 8, found in Saccharomyces cerevisiae (strain ATCC 204508 / S288c) (Baker's yeast).